A 476-amino-acid chain; its full sequence is ATP synthase subunit beta (476 aa).

Position 154–161 (154–161 (GGAGVGKT)) interacts with ATP.

This sequence belongs to the ATPase alpha/beta chains family. In terms of assembly, F-type ATPases have 2 components, CF(1) - the catalytic core - and CF(0) - the membrane proton channel. CF(1) has five subunits: alpha(3), beta(3), gamma(1), delta(1), epsilon(1). CF(0) has four main subunits: a(1), b(1), b'(1) and c(9-12).

It localises to the cell inner membrane. It catalyses the reaction ATP + H2O + 4 H(+)(in) = ADP + phosphate + 5 H(+)(out). In terms of biological role, produces ATP from ADP in the presence of a proton gradient across the membrane. The catalytic sites are hosted primarily by the beta subunits. The sequence is that of ATP synthase subunit beta from Rhodopseudomonas palustris (strain BisB5).